We begin with the raw amino-acid sequence, 460 residues long: Interleukin-1 receptor-associated kinase 4 (460 aa).

An N-acetylmethionine modification is found at methionine 1. The Death domain maps to 20 to 104; sequence RKLSDFIDPQ…APASLLLPDA (85 aa). Lysine 34 is subject to N6-acetyllysine. Residues 186–454 enclose the Protein kinase domain; the sequence is SVGGNKMGEG…PDIKKVQQLL (269 aa). Residues 192–200 and lysine 213 each bind ATP; that span reads MGEGGFGVV. The Proton acceptor role is filled by aspartate 311. Residues 313-316 and aspartate 329 contribute to the ATP site; that span reads KSAN. Phosphothreonine is present on residues threonine 342 and threonine 345. At serine 346 the chain carries Phosphoserine.

The protein belongs to the protein kinase superfamily. TKL Ser/Thr protein kinase family. Pelle subfamily. As to quaternary structure, associates with MYD88 and IRAK2 to form a ternary complex called the Myddosome. Once phosphorylated, IRAK4 dissociates from the receptor complex and then associates with the TNF receptor-associated factor 6 (TRAF6), IRAK1, and PELI1; this intermediate complex is required for subsequent NF-kappa-B activation. Direct binding of SMAD6 to PELI1 prevents complex formation and hence negatively regulates IL1R-TLR signaling and eventually NF-kappa-B-mediated gene expression. Interacts with IL1RL1. Interacts (when phosphorylated) with IRAK1. May interact (when phosphorylated) with IRAK3. Mg(2+) is required as a cofactor. In terms of processing, phosphorylated.

It localises to the cytoplasm. The catalysed reaction is L-seryl-[protein] + ATP = O-phospho-L-seryl-[protein] + ADP + H(+). It carries out the reaction L-threonyl-[protein] + ATP = O-phospho-L-threonyl-[protein] + ADP + H(+). Functionally, serine/threonine-protein kinase that plays a critical role in initiating innate immune response against foreign pathogens. Involved in Toll-like receptor (TLR) and IL-1R signaling pathways. Is rapidly recruited by MYD88 to the receptor-signaling complex upon TLR activation to form the Myddosome together with IRAK2. Phosphorylates initially IRAK1, thus stimulating the kinase activity and intensive autophosphorylation of IRAK1. Phosphorylates E3 ubiquitin ligases Pellino proteins (PELI1, PELI2 and PELI3) to promote pellino-mediated polyubiquitination of IRAK1. Then, the ubiquitin-binding domain of IKBKG/NEMO binds to polyubiquitinated IRAK1 bringing together the IRAK1-MAP3K7/TAK1-TRAF6 complex and the NEMO-IKKA-IKKB complex. In turn, MAP3K7/TAK1 activates IKKs (CHUK/IKKA and IKBKB/IKKB) leading to NF-kappa-B nuclear translocation and activation. Alternatively, phosphorylates TIRAP to promote its ubiquitination and subsequent degradation. Phosphorylates NCF1 and regulates NADPH oxidase activation after LPS stimulation suggesting a similar mechanism during microbial infections. The protein is Interleukin-1 receptor-associated kinase 4 (IRAK4) of Homo sapiens (Human).